A 298-amino-acid polypeptide reads, in one-letter code: uncharacterized protein (298 aa).

Basic and acidic residues predominate over residues 1–17; it reads MLTKSAENKRNRKDDSM. A disordered region spans residues 1–22; sequence MLTKSAENKRNRKDDSMRPGQQ. An S1 motif domain is found at 167–227; it reads NKELTGTVYR…EDGSVNLSLL (61 aa).

This is an uncharacterized protein from Bacillus subtilis (strain 168).